Here is a 116-residue protein sequence, read N- to C-terminus: Large ribosomal subunit protein bL17 (116 aa).

Belongs to the bacterial ribosomal protein bL17 family. In terms of assembly, part of the 50S ribosomal subunit. Contacts protein L32.

The protein is Large ribosomal subunit protein bL17 of Prochlorococcus marinus (strain SARG / CCMP1375 / SS120).